The sequence spans 270 residues: 5'-AMP-activated protein kinase subunit beta-1 (270 aa).

A disordered region spans residues 1–46; it reads MGNTSSERAALERHGGHKTPRRDSSGGTKDGDRPKILMDSPEDADL. Residue Gly2 is the site of N-myristoyl glycine attachment. A Phosphothreonine modification is found at Thr4. Phosphoserine is present on residues Ser5 and Ser6. Thr19 is subject to Phosphothreonine. Basic and acidic residues predominate over residues 21-36; sequence RRDSSGGTKDGDRPKI. 2 positions are modified to phosphoserine; by autocatalysis: Ser24 and Ser25. Residues Ser40, Ser96, and Ser101 each carry the phosphoserine modification. The tract at residues 68 to 163 is glycogen-binding domain; it reads EVNDKAPAQA…QVKKTDFEVF (96 aa). A Phosphoserine; by autocatalysis modification is found at Ser108. At Thr148 the chain carries Phosphothreonine. Ser182 bears the Phosphoserine mark.

The protein belongs to the 5'-AMP-activated protein kinase beta subunit family. AMPK is a heterotrimer of an alpha catalytic subunit (PRKAA1 or PRKAA2), a beta (PRKAB1 or PRKAB2) and a gamma non-catalytic subunits (PRKAG1, PRKAG2 or PRKAG3). Interacts with FNIP1 and FNIP2. Post-translationally, phosphorylated when associated with the catalytic subunit (PRKAA1 or PRKAA2). Phosphorylated by ULK1; leading to negatively regulate AMPK activity and suggesting the existence of a regulatory feedback loop between ULK1 and AMPK.

Its function is as follows. Non-catalytic subunit of AMP-activated protein kinase (AMPK), an energy sensor protein kinase that plays a key role in regulating cellular energy metabolism. In response to reduction of intracellular ATP levels, AMPK activates energy-producing pathways and inhibits energy-consuming processes: inhibits protein, carbohydrate and lipid biosynthesis, as well as cell growth and proliferation. AMPK acts via direct phosphorylation of metabolic enzymes, and by longer-term effects via phosphorylation of transcription regulators. Also acts as a regulator of cellular polarity by remodeling the actin cytoskeleton; probably by indirectly activating myosin. Beta non-catalytic subunit acts as a scaffold on which the AMPK complex assembles, via its C-terminus that bridges alpha (PRKAA1 or PRKAA2) and gamma subunits (PRKAG1, PRKAG2 or PRKAG3). The sequence is that of 5'-AMP-activated protein kinase subunit beta-1 (PRKAB1) from Pongo abelii (Sumatran orangutan).